We begin with the raw amino-acid sequence, 444 residues long: MQVTETQKEGLKRAYTITVTAAELDAKVQEKLVEAQPDIEMKGFRKGKVPLAMLKKQFGPRLLGDAMQDAIDGAMRDHLETSGDRPAMQPEVRMVDGETWKEGTDVVVEMKYEALPEIPEIETSKVSLERLVVKADEAAIEEALKNLAESAQNFEDRRKGSKAKDGDQVVIDFKGSVDGELFEGGSAEDYPLVLGSGSFIPGFEEQLVGTKVDDEVTVKVSFPAEYGAKHLAGKEAEFACTVKAVKAPKAAELDDELAKKYGAEDLAALKSQISERLEAEYKGASRAVLKRALLDQLDQMVSFELPSKLVEAEAHQIAHQLWHEEHPEEHGHNHGNIEPTDEHKALAERRVRLGLLLAEIGRKAEVTVTDAEMTQAVLAQARQYPGQERAYFEFVQKNPQIQQQLRAPIFEDKVVDLILEGATVTEKEVGKDDLQKAIEALDEM.

A PPIase FKBP-type domain is found at 166–251 (GDQVVIDFKG…VKAVKAPKAA (86 aa)).

This sequence belongs to the FKBP-type PPIase family. Tig subfamily.

It is found in the cytoplasm. The catalysed reaction is [protein]-peptidylproline (omega=180) = [protein]-peptidylproline (omega=0). Involved in protein export. Acts as a chaperone by maintaining the newly synthesized protein in an open conformation. Functions as a peptidyl-prolyl cis-trans isomerase. This Cereibacter sphaeroides (strain ATCC 17029 / ATH 2.4.9) (Rhodobacter sphaeroides) protein is Trigger factor.